Consider the following 229-residue polypeptide: Mannose-specific lectin TAR1 (229 aa).

Residues 1-23 form the signal peptide; the sequence is MAKLLLFLLPAILGLLIPRSAVA. Bulb-type lectin domains are found at residues 26–131 and 145–229; these read TNYL…PWVP and DNLL…DYVL. Beta-D-mannose is bound by residues 51–55, tyrosine 59, tryptophan 63, glutamine 64, 170–174, tyrosine 178, and 182–185; these read QNDCN, QGDCN, and YGWQ. The short motif at 51–59 is the Carbohydrate-binding motif 1 element; the sequence is QNDCNLVLY. 2 disulfides stabilise this stretch: cysteine 54/cysteine 74 and cysteine 173/cysteine 195. The short motif at 170–178 is the Carbohydrate-binding motif 2 element; the sequence is QGDCNLVLY.

In terms of assembly, forms heterotetramer of 2 chains 1 and 2 chains 2 arranged as a dimer of chain 1 and chain 2 heterodimers.

It localises to the secreted. Its function is as follows. Mannose-specific lectin. Shows agglutinating activity towards erythrocytes from rabbit. The polypeptide is Mannose-specific lectin TAR1 (Colocasia esculenta (Wild taro)).